We begin with the raw amino-acid sequence, 364 residues long: Endoglucanase A (364 aa).

The active-site Proton donor is glutamate 169. The active-site Nucleophile is glutamate 293.

The protein belongs to the glycosyl hydrolase 5 (cellulase A) family.

The protein resides in the cytoplasm. The catalysed reaction is Endohydrolysis of (1-&gt;4)-beta-D-glucosidic linkages in cellulose, lichenin and cereal beta-D-glucans.. The enzyme catalyses Endohydrolysis of (1-&gt;4)-beta-D-xylosidic linkages in xylans.. Functionally, hydrolyzes both carboxymethylcellulose and xylan. Probably has a role in hydrolyzing oligosaccharides derived from cellulose, which are transported across the cell wall. In Ruminococcus albus, this protein is Endoglucanase A (celA).